A 277-amino-acid chain; its full sequence is Outer plastidial membrane protein porin (277 aa).

Belongs to the eukaryotic mitochondrial porin (TC 1.B.8.1) family.

Its subcellular location is the plastid outer membrane. Its function is as follows. Forms a channel through the cell membrane that allows diffusion of small hydrophilic molecules. The channel adopts an open conformation at low or zero membrane potential and a closed conformation at potentials above 30-40 mV. The open state has a weak anion selectivity whereas the closed state is cation-selective. This is Outer plastidial membrane protein porin (POR1) from Zea mays (Maize).